Here is a 471-residue protein sequence, read N- to C-terminus: Sulfate adenylyltransferase subunit 1 (471 aa).

In terms of domain architecture, tr-type G spans 22 to 239 (KDMLRFLTCG…NIEIGEDDNL (218 aa)). The G1 stretch occupies residues 31 to 38 (GSVDDGKS). Residue 31-38 (GSVDDGKS) participates in GTP binding. The interval 89 to 93 (GITID) is G2. The segment at 110-113 (DTPG) is G3. GTP-binding positions include 110–114 (DTPGH) and 165–168 (NKMD). The interval 165–168 (NKMD) is G4. The interval 202–204 (SAL) is G5.

This sequence belongs to the TRAFAC class translation factor GTPase superfamily. Classic translation factor GTPase family. CysN/NodQ subfamily. Heterodimer composed of CysD, the smaller subunit, and CysN.

It carries out the reaction sulfate + ATP + H(+) = adenosine 5'-phosphosulfate + diphosphate. Its pathway is sulfur metabolism; hydrogen sulfide biosynthesis; sulfite from sulfate: step 1/3. With CysD forms the ATP sulfurylase (ATPS) that catalyzes the adenylation of sulfate producing adenosine 5'-phosphosulfate (APS) and diphosphate, the first enzymatic step in sulfur assimilation pathway. APS synthesis involves the formation of a high-energy phosphoric-sulfuric acid anhydride bond driven by GTP hydrolysis by CysN coupled to ATP hydrolysis by CysD. The polypeptide is Sulfate adenylyltransferase subunit 1 (Alteromonas mediterranea (strain DSM 17117 / CIP 110805 / LMG 28347 / Deep ecotype)).